Here is a 457-residue protein sequence, read N- to C-terminus: tRNA-2-methylthio-N(6)-dimethylallyladenosine synthase (457 aa).

Residues Lys-3–Glu-120 form the MTTase N-terminal domain. 6 residues coordinate [4Fe-4S] cluster: Cys-12, Cys-49, Cys-83, Cys-157, Cys-161, and Cys-164. A Radical SAM core domain is found at Arg-143–Arg-377. A TRAM domain is found at Asp-380–Leu-447.

This sequence belongs to the methylthiotransferase family. MiaB subfamily. In terms of assembly, monomer. It depends on [4Fe-4S] cluster as a cofactor.

Its subcellular location is the cytoplasm. It carries out the reaction N(6)-dimethylallyladenosine(37) in tRNA + (sulfur carrier)-SH + AH2 + 2 S-adenosyl-L-methionine = 2-methylsulfanyl-N(6)-dimethylallyladenosine(37) in tRNA + (sulfur carrier)-H + 5'-deoxyadenosine + L-methionine + A + S-adenosyl-L-homocysteine + 2 H(+). In terms of biological role, catalyzes the methylthiolation of N6-(dimethylallyl)adenosine (i(6)A), leading to the formation of 2-methylthio-N6-(dimethylallyl)adenosine (ms(2)i(6)A) at position 37 in tRNAs that read codons beginning with uridine. This is tRNA-2-methylthio-N(6)-dimethylallyladenosine synthase from Paraburkholderia phytofirmans (strain DSM 17436 / LMG 22146 / PsJN) (Burkholderia phytofirmans).